A 79-amino-acid chain; its full sequence is Acyl carrier protein (79 aa).

Positions 2–77 constitute a Carrier domain; the sequence is SDIADKVKKI…DAIDYIEKQK (76 aa). Ser37 bears the O-(pantetheine 4'-phosphoryl)serine mark.

It belongs to the acyl carrier protein (ACP) family. Post-translationally, 4'-phosphopantetheine is transferred from CoA to a specific serine of apo-ACP by AcpS. This modification is essential for activity because fatty acids are bound in thioester linkage to the sulfhydryl of the prosthetic group.

The protein resides in the cytoplasm. It functions in the pathway lipid metabolism; fatty acid biosynthesis. Functionally, carrier of the growing fatty acid chain in fatty acid biosynthesis. The polypeptide is Acyl carrier protein (Gluconobacter oxydans (strain 621H) (Gluconobacter suboxydans)).